A 93-amino-acid polypeptide reads, in one-letter code: MADIMDIKSILYTEKSLGLQEKGVLVVQTAQNMTKNQLKEVFKTYFGFEPLKINSLKQEGKVKRFRGKLGQRKSFKKFYVKVPEGASIVALGA.

It belongs to the universal ribosomal protein uL23 family. In terms of assembly, part of the 50S ribosomal subunit. Contacts protein L29, and trigger factor when it is bound to the ribosome.

One of the early assembly proteins it binds 23S rRNA. One of the proteins that surrounds the polypeptide exit tunnel on the outside of the ribosome. Forms the main docking site for trigger factor binding to the ribosome. The sequence is that of Large ribosomal subunit protein uL23 from Helicobacter acinonychis (strain Sheeba).